We begin with the raw amino-acid sequence, 163 residues long: Cyanate hydratase (163 aa).

Active-site residues include Arg-103, Glu-106, and Ser-129.

It belongs to the cyanase family.

It carries out the reaction cyanate + hydrogencarbonate + 3 H(+) = NH4(+) + 2 CO2. Catalyzes the reaction of cyanate with bicarbonate to produce ammonia and carbon dioxide. The sequence is that of Cyanate hydratase from Ajellomyces capsulatus (strain H143) (Darling's disease fungus).